Here is a 582-residue protein sequence, read N- to C-terminus: ATP-dependent lipid A-core flippase (582 aa).

A run of 5 helical transmembrane segments spans residues 25–45 (WFML…QAGA), 64–84 (VLIV…GQFM), 142–162 (AIIV…FLLW), 165–185 (WKLT…MNIT), and 253–273 (VIVQ…YIHL). The ABC transmembrane type-1 domain occupies 29 to 309 (VISVIGYALY…LTDVNVKVQR (281 aa)). The ABC transporter domain maps to 342–577 (IDFEGVSFGY…NGLYTQMYRM (236 aa)). 375-382 (GRSGAGKS) contacts ATP.

The protein belongs to the ABC transporter superfamily. Lipid exporter (TC 3.A.1.106) family. In terms of assembly, homodimer.

Its subcellular location is the cell inner membrane. It catalyses the reaction ATP + H2O + lipid A-core oligosaccharideSide 1 = ADP + phosphate + lipid A-core oligosaccharideSide 2.. Functionally, involved in lipopolysaccharide (LPS) biosynthesis. Translocates lipid A-core from the inner to the outer leaflet of the inner membrane. Transmembrane domains (TMD) form a pore in the inner membrane and the ATP-binding domain (NBD) is responsible for energy generation. In Alcanivorax borkumensis (strain ATCC 700651 / DSM 11573 / NCIMB 13689 / SK2), this protein is ATP-dependent lipid A-core flippase.